The following is a 487-amino-acid chain: Meiotic recombination protein SPO11-4 (487 aa).

The disordered stretch occupies residues 1-56 (MDDSTDDDSYHPRKHYAYDRQVSSSRWRTSREYIRGPGPETHTTESAQDGQDPPAG). Residues 119–252 (KSRVEARKTL…LGIIAAEKGI (134 aa)) enclose the Topo IIA-type catalytic domain. The active-site O-(5'-phospho-DNA)-tyrosine intermediate is tyrosine 213. Residues glutamate 301 and aspartate 353 each contribute to the Mg(2+) site.

The protein belongs to the TOP6A family. In terms of assembly, homodimer. Interacts with TOP6B. It depends on Mg(2+) as a cofactor.

Its subcellular location is the nucleus. It catalyses the reaction ATP-dependent breakage, passage and rejoining of double-stranded DNA.. Its function is as follows. Required for meiotic recombination. Mediates DNA cleavage that forms the double-strand breaks (DSB) that initiate meiotic recombination. Possesses double-stranded DNA cleavage activity in vitro. The polypeptide is Meiotic recombination protein SPO11-4 (SPO11-4) (Oryza sativa subsp. japonica (Rice)).